The primary structure comprises 349 residues: Protein RAE1 (349 aa).

The interval 1 to 21 (MATFGAPATANSNPNKSYEVT) is disordered. The residue at position 2 (Ala-2) is an N-acetylalanine. A compositionally biased stretch (polar residues) spans 9–21 (TANSNPNKSYEVT). 5 WD repeats span residues 23-62 (SPAD…ASLA), 70-109 (SHDQ…QPVT), 112-151 (MHEG…PVHT), 153-190 (QLPD…TEFK), and 244-283 (NDIY…RLKA). The short motif at 128–144 (LLATGSWDKTLKYWDTR) is the DWD box element.

This sequence belongs to the WD repeat rae1 family. In terms of assembly, part of the nuclear pore complex (NPC). The NPC has an eight-fold symmetrical structure comprising a central transport channel and two rings, the cytoplasmic and nuclear rings, to which eight filaments are attached. The cytoplasmic filaments have loose ends, while the nuclear filaments are joined in a distal ring, forming a nuclear basket. NPCs are highly dynamic in configuration and composition, and can be devided in 3 subcomplexes, the NUP62 subcomplex, the NUP107-160 subcomplex and the NUP93 subcomplex, containing approximately 30 different nucleoporin proteins. Interacts with DDB1A.

The protein resides in the nucleus envelope. It localises to the nucleus. Its subcellular location is the nuclear pore complex. The sequence is that of Protein RAE1 from Arabidopsis thaliana (Mouse-ear cress).